A 572-amino-acid polypeptide reads, in one-letter code: Probable cysteine--tRNA ligase, mitochondrial (572 aa).

A Zn(2+)-binding site is contributed by C81. Position 82 (G82) interacts with L-cysteine. Residues 83–93 (PTVYDHAHLGH) carry the 'HIGH' region motif. Position 122 (T122) interacts with L-cysteine. The 'KIIK' region motif lies at 127–130 (KIIK). Residues C260, H285, and E289 each contribute to the Zn(2+) site. Position 285 (H285) interacts with L-cysteine. The short motif at 320-324 (KMSKS) is the 'KMSKS' region element. K323 is a binding site for ATP.

The protein belongs to the class-I aminoacyl-tRNA synthetase family. Zn(2+) is required as a cofactor.

The protein localises to the mitochondrion. The enzyme catalyses tRNA(Cys) + L-cysteine + ATP = L-cysteinyl-tRNA(Cys) + AMP + diphosphate. It carries out the reaction 2 L-cysteine = S-sulfanyl-L-cysteine + L-alanine. The catalysed reaction is S-sulfanyl-L-cysteine + L-cysteine = S-disulfanyl-L-cysteine + L-alanine. It catalyses the reaction S-sulfanyl-L-cysteine + tRNA(Cys) + ATP = (S)-sulfanyl-L-cysteinyl-tRNA(Cys) + AMP + diphosphate. The enzyme catalyses S-disulfanyl-L-cysteine + tRNA(Cys) + ATP = (S)-disulfanyl-L-cysteinyl-tRNA(Cys) + AMP + diphosphate. Its function is as follows. Mitochondrial cysteine-specific aminoacyl-tRNA synthetase that catalyzes the ATP-dependent ligation of cysteine to tRNA(Cys). Functionally, in addition to its role as an aminoacyl-tRNA synthetase, has also cysteine persulfide synthase activity. Produces reactive persulfide species such as cysteine persulfide (CysSSH) from substrate cysteine and mediate direct incorporation of CysSSH into proteins during translations, resulting in protein persulfides and polysulfides. CysSSHs behave as potent antioxidants and cellular protectants. This is Probable cysteine--tRNA ligase, mitochondrial (cars2) from Xenopus tropicalis (Western clawed frog).